The following is a 172-amino-acid chain: MANGTNASAPYYSYEYYLDYLDLIPVDEKKLKAHKHSIVIAFWVSLAAFVVLLFLILLYMSWSGSPQMRNSPKHHQTCPWSHGLNLHLCIQKCLPCHREPLATSQAQASSVEPGSRTGPDQPLRQESSSTLPLGVFQTHPTLLWELTLNGGPLVRSKPSEPPPGDRTSQLQS.

A helical transmembrane segment spans residues 38 to 58 (IVIAFWVSLAAFVVLLFLILL). Disordered stretches follow at residues 105–130 (QAQASSVEPGSRTGPDQPLRQESSST) and 152–172 (PLVRSKPSEPPPGDRTSQLQS).

It belongs to the MRAP family. In terms of assembly, homodimer and heterodimer. Forms antiparallel homodimers and heterodimers with MRAP2. Interacts with MC1R, MC2R, MC3R, MC4R and MC5R.

It is found in the cell membrane. It localises to the endoplasmic reticulum membrane. Functionally, modulator of melanocortin receptors (MC1R, MC2R, MC3R, MC4R and MC5R). Acts by increasing ligand-sensitivity of melanocortin receptors and enhancing generation of cAMP by the receptors. Required both for MC2R trafficking to the cell surface of adrenal cells and for signaling in response to corticotropin (ACTH). May be involved in the intracellular trafficking pathways in adipocyte cells. The protein is Melanocortin-2 receptor accessory protein (MRAP) of Pan troglodytes (Chimpanzee).